A 158-amino-acid polypeptide reads, in one-letter code: Secreted RxLR effector protein 131 (158 aa).

The first 20 residues, 1-20 (MRQIPLVVVLLLAYAARLQG), serve as a signal peptide directing secretion. A RxLR-dEER motif is present at residues 39–57 (RDLDGSTTSMSVNVDDEER). The interval 120 to 158 (KGNVKYLAIIYVICILSVLGILGTVFAINRNISNQYIHE) is host BKI1-binding. Residues 127–147 (AIIYVICILSVLGILGTVFAI) traverse the membrane as a helical segment. N-linked (GlcNAc...) asparagine glycosylation is present at N150.

The protein belongs to the RxLR effector family. Interacts with host BKI1.

The protein localises to the secreted. Its subcellular location is the host cell membrane. Secreted effector that suppresses pathogen-associated molecular pattern (PAMP)-triggered immunity (PTI) in host plants. Suppresses both defense-related brassinosteroid (BR) and ERECTA (ER) signaling pathways in planta by interacting with host BRI1 kinase inhibitor 1 (BKI1) at the host plasma membrane, leading to a host dwarf phenotype. This chain is Secreted RxLR effector protein 131, found in Plasmopara viticola (Downy mildew of grapevine).